A 504-amino-acid chain; its full sequence is Tyrosine-protein kinase HCK (504 aa).

The N-myristoyl glycine moiety is linked to residue G2. A lipid anchor (S-palmitoyl cysteine) is attached at C3. T15 carries the phosphothreonine modification. Y30 is subject to Phosphotyrosine. Residues 34–49 show a composition bias toward polar residues; it reads PTSTIKPGPNSNNRNT. The segment at 34 to 53 is disordered; sequence PTSTIKPGPNSNNRNTPGIG. The SH3 domain maps to 56–116; that stretch reads SEDIIVVALY…PSNYVARVDS (61 aa). Residues 122-219 form the SH2 domain; the sequence is WFFKGISRKD…GLCQKLSVPC (98 aa). T180 carries the phosphothreonine modification. Y187 carries the phosphotyrosine modification. One can recognise a Protein kinase domain in the interval 240–493; the sequence is LKLEKKLGAG…YIQSVLDDFY (254 aa). Residues 246-254 and K268 contribute to the ATP site; that span reads LGAGQFGEV. The Proton acceptor role is filled by D359. Y389 is subject to Phosphotyrosine; by autocatalysis. Position 440 is a phosphoserine (S440). Position 500 is a phosphotyrosine (Y500).

Belongs to the protein kinase superfamily. Tyr protein kinase family. SRC subfamily. Interacts with ADAM15. Interacts with FASLG. Interacts with ARRB1 and ARRB2. Interacts with FCGR1A; the interaction may be indirect. Interacts with IL6ST. Interacts (via SH3 domain) with ELMO1. Interacts (via SH3 domain) with TP73. Interacts with YAP1. Interacts with ABL1 and ITGB1, and thereby recruits ABL1 to activated ITGB1. Interacts (via SH2 domain) with FLT3 (tyrosine phosphorylated). Interacts with CBL. Interacts with VAV1, WAS and RAPGEF1. Interacts (via SH3 domain) with WDCP. Phosphorylated on several tyrosine residues. Autophosphorylated. Becomes rapidly phosphorylated upon activation of the immunoglobulin receptors FCGR1A and FCGR2A. Phosphorylation at Tyr-389 increases kinase activity. Phosphorylation at Tyr-500 inhibits kinase activity. Kinase activity is not required for phosphorylation at Tyr-500, suggesting that this site may be a target of other kinases. Post-translationally, ubiquitinated by CBL, leading to its degradation via the proteasome. In terms of processing, palmitoylation requires prior myristoylation. Palmitoylation is required for caveolar localization.

Its subcellular location is the cytoplasmic vesicle. The protein resides in the secretory vesicle. It is found in the cytoplasm. It localises to the cytosol. The protein localises to the cell membrane. Its subcellular location is the membrane. The protein resides in the caveola. It is found in the cell junction. It localises to the focal adhesion. The protein localises to the cytoskeleton. Its subcellular location is the golgi apparatus. The protein resides in the lysosome. It is found in the nucleus. It carries out the reaction L-tyrosyl-[protein] + ATP = O-phospho-L-tyrosyl-[protein] + ADP + H(+). With respect to regulation, subject to autoinhibition, mediated by intramolecular interactions involving the SH2 and SH3 domains. Kinase activity is also regulated by phosphorylation at regulatory tyrosine residues. Phosphorylation at Tyr-389 is required for optimal activity. Phosphorylation at Tyr-500 inhibits kinase activity. Its function is as follows. Non-receptor tyrosine-protein kinase found in hematopoietic cells that transmits signals from cell surface receptors and plays an important role in the regulation of innate immune responses, including neutrophil, monocyte, macrophage and mast cell functions, phagocytosis, cell survival and proliferation, cell adhesion and migration. Acts downstream of receptors that bind the Fc region of immunoglobulins, such as FCGR1A and FCGR2A, but also CSF3R, PLAUR, the receptors for IFNG, IL2, IL6 and IL8, and integrins, such as ITGB1 and ITGB2. During the phagocytic process, mediates mobilization of secretory lysosomes, degranulation, and activation of NADPH oxidase to bring about the respiratory burst. Plays a role in the release of inflammatory molecules. Promotes reorganization of the actin cytoskeleton and actin polymerization, formation of podosomes and cell protrusions. Inhibits TP73-mediated transcription activation and TP73-mediated apoptosis. Phosphorylates CBL in response to activation of immunoglobulin gamma Fc region receptors. Phosphorylates ADAM15, BCR, ELMO1, FCGR2A, GAB1, GAB2, RAPGEF1, STAT5B, TP73, VAV1 and WAS. This is Tyrosine-protein kinase HCK (HCK) from Macaca fascicularis (Crab-eating macaque).